A 312-amino-acid polypeptide reads, in one-letter code: Aspartate carbamoyltransferase catalytic subunit (312 aa).

Carbamoyl phosphate-binding residues include R62 and T63. K90 contacts L-aspartate. The carbamoyl phosphate site is built by R112, H140, and Q143. The L-aspartate site is built by R173 and R228. Residues G269 and P270 each coordinate carbamoyl phosphate.

This sequence belongs to the aspartate/ornithine carbamoyltransferase superfamily. ATCase family. As to quaternary structure, heterododecamer (2C3:3R2) of six catalytic PyrB chains organized as two trimers (C3), and six regulatory PyrI chains organized as three dimers (R2).

It carries out the reaction carbamoyl phosphate + L-aspartate = N-carbamoyl-L-aspartate + phosphate + H(+). It functions in the pathway pyrimidine metabolism; UMP biosynthesis via de novo pathway; (S)-dihydroorotate from bicarbonate: step 2/3. Catalyzes the condensation of carbamoyl phosphate and aspartate to form carbamoyl aspartate and inorganic phosphate, the committed step in the de novo pyrimidine nucleotide biosynthesis pathway. This Deinococcus geothermalis (strain DSM 11300 / CIP 105573 / AG-3a) protein is Aspartate carbamoyltransferase catalytic subunit.